Reading from the N-terminus, the 989-residue chain is Translation initiation factor IF-2 (989 aa).

2 disordered regions span residues 43–219 (KRRR…LQAR) and 234–379 (EARR…GGAR). Over residues 72–87 (NTPNKDTAVTQTATKN) the composition is skewed to polar residues. A compositionally biased stretch (low complexity) spans 105 to 146 (PKPVAAEATAQETSKAAPAAAQPVAEKEAAAPASAEAAKSAA). Over residues 149–159 (VTDRGAKKTTE) the composition is skewed to basic and acidic residues. A compositionally biased stretch (polar residues) spans 160 to 171 (KNGANASGNRPS). Residues 234-293 (EARRREDRLKQEADLEEQRRIEEKRRLEAEAKVEAEKQAALKEKEKAEAKARAKAEKEAK) are compositionally biased toward basic and acidic residues. A compositionally biased stretch (low complexity) spans 294 to 303 (AAQAKTAGAA). Over residues 342 to 361 (PRREAPRPAMRDRKGEDRRQ) the composition is skewed to basic and acidic residues. A tr-type G domain is found at 489 to 659 (SRPPVVTIMG…LLQAEMLELK (171 aa)). The G1 stretch occupies residues 498 to 505 (GHVDHGKT). 498–505 (GHVDHGKT) is a binding site for GTP. Residues 523–527 (GITQH) form a G2 region. A G3 region spans residues 545–548 (DTPG). Residues 545-549 (DTPGH) and 599-602 (NKMD) contribute to the GTP site. The tract at residues 599–602 (NKMD) is G4. Positions 635–637 (SAA) are G5.

The protein belongs to the TRAFAC class translation factor GTPase superfamily. Classic translation factor GTPase family. IF-2 subfamily.

It is found in the cytoplasm. Functionally, one of the essential components for the initiation of protein synthesis. Protects formylmethionyl-tRNA from spontaneous hydrolysis and promotes its binding to the 30S ribosomal subunits. Also involved in the hydrolysis of GTP during the formation of the 70S ribosomal complex. This is Translation initiation factor IF-2 from Zymomonas mobilis subsp. mobilis (strain ATCC 31821 / ZM4 / CP4).